A 417-amino-acid chain; its full sequence is Tyrosine--tRNA ligase (417 aa).

Tyrosine 34 contacts L-tyrosine. Positions 39–48 (PSGDSLHIGH) match the 'HIGH' region motif. Residues tyrosine 165 and glutamine 169 each coordinate L-tyrosine. Residues 227–231 (KFGKT) carry the 'KMSKS' region motif. Lysine 230 contributes to the ATP binding site. Residues 349–415 (ANIVDWLVDT…GKKNYTLAKV (67 aa)) enclose the S4 RNA-binding domain.

It belongs to the class-I aminoacyl-tRNA synthetase family. TyrS type 1 subfamily. In terms of assembly, homodimer.

It is found in the cytoplasm. It catalyses the reaction tRNA(Tyr) + L-tyrosine + ATP = L-tyrosyl-tRNA(Tyr) + AMP + diphosphate + H(+). In terms of biological role, catalyzes the attachment of tyrosine to tRNA(Tyr) in a two-step reaction: tyrosine is first activated by ATP to form Tyr-AMP and then transferred to the acceptor end of tRNA(Tyr). This Limosilactobacillus fermentum (strain NBRC 3956 / LMG 18251) (Lactobacillus fermentum) protein is Tyrosine--tRNA ligase.